Here is a 556-residue protein sequence, read N- to C-terminus: Glutamine--tRNA ligase (556 aa).

Positions P34–H44 match the 'HIGH' region motif. Residues E35–N37 and H41–S47 contribute to the ATP site. L-glutamine is bound by residues D67 and Y212. ATP is bound by residues T231, R261–L262, and M269–K271. Residues V268 to R272 carry the 'KMSKS' region motif.

The protein belongs to the class-I aminoacyl-tRNA synthetase family. As to quaternary structure, monomer.

The protein resides in the cytoplasm. The catalysed reaction is tRNA(Gln) + L-glutamine + ATP = L-glutaminyl-tRNA(Gln) + AMP + diphosphate. The polypeptide is Glutamine--tRNA ligase (Vibrio vulnificus (strain YJ016)).